The chain runs to 185 residues: GTP cyclohydrolase 1 (185 aa).

Residues Cys-76, His-79, and Cys-147 each coordinate Zn(2+).

Belongs to the GTP cyclohydrolase I family. As to quaternary structure, toroid-shaped homodecamer, composed of two pentamers of five dimers.

It carries out the reaction GTP + H2O = 7,8-dihydroneopterin 3'-triphosphate + formate + H(+). Its pathway is cofactor biosynthesis; 7,8-dihydroneopterin triphosphate biosynthesis; 7,8-dihydroneopterin triphosphate from GTP: step 1/1. This is GTP cyclohydrolase 1 from Clostridium perfringens (strain ATCC 13124 / DSM 756 / JCM 1290 / NCIMB 6125 / NCTC 8237 / Type A).